Reading from the N-terminus, the 318-residue chain is Ribose-phosphate pyrophosphokinase (318 aa).

Residues Asp40–Glu42 and Arg99–Gln100 each bind ATP. Mg(2+) contacts are provided by His134 and Asp173. Lys196 is an active-site residue. Residues Arg198, Asp222, and Asp226–Thr230 contribute to the D-ribose 5-phosphate site.

It belongs to the ribose-phosphate pyrophosphokinase family. Class I subfamily. In terms of assembly, homohexamer. The cofactor is Mg(2+).

The protein resides in the cytoplasm. The enzyme catalyses D-ribose 5-phosphate + ATP = 5-phospho-alpha-D-ribose 1-diphosphate + AMP + H(+). It functions in the pathway metabolic intermediate biosynthesis; 5-phospho-alpha-D-ribose 1-diphosphate biosynthesis; 5-phospho-alpha-D-ribose 1-diphosphate from D-ribose 5-phosphate (route I): step 1/1. Its function is as follows. Involved in the biosynthesis of the central metabolite phospho-alpha-D-ribosyl-1-pyrophosphate (PRPP) via the transfer of pyrophosphoryl group from ATP to 1-hydroxyl of ribose-5-phosphate (Rib-5-P). This Burkholderia pseudomallei (strain K96243) protein is Ribose-phosphate pyrophosphokinase.